A 192-amino-acid polypeptide reads, in one-letter code: Soluble inorganic pyrophosphatase 2 (192 aa).

Residues lysine 38, arginine 52, and tyrosine 64 each coordinate substrate. Mg(2+) contacts are provided by aspartate 74, aspartate 79, and aspartate 111. Residue tyrosine 148 coordinates substrate.

Monomer. It depends on Mg(2+) as a cofactor. The N-terminus is blocked.

It localises to the mitochondrion. The enzyme catalyses diphosphate + H2O = 2 phosphate + H(+). In Chlamydomonas reinhardtii (Chlamydomonas smithii), this protein is Soluble inorganic pyrophosphatase 2 (ppa2).